A 290-amino-acid polypeptide reads, in one-letter code: 4-hydroxy-tetrahydrodipicolinate synthase (290 aa).

Residue threonine 44 participates in pyruvate binding. The active-site Proton donor/acceptor is the tyrosine 132. Lysine 160 acts as the Schiff-base intermediate with substrate in catalysis. Position 202 (isoleucine 202) interacts with pyruvate.

This sequence belongs to the DapA family. In terms of assembly, homotetramer; dimer of dimers.

The protein resides in the cytoplasm. It carries out the reaction L-aspartate 4-semialdehyde + pyruvate = (2S,4S)-4-hydroxy-2,3,4,5-tetrahydrodipicolinate + H2O + H(+). It functions in the pathway amino-acid biosynthesis; L-lysine biosynthesis via DAP pathway; (S)-tetrahydrodipicolinate from L-aspartate: step 3/4. Its function is as follows. Catalyzes the condensation of (S)-aspartate-beta-semialdehyde [(S)-ASA] and pyruvate to 4-hydroxy-tetrahydrodipicolinate (HTPA). The chain is 4-hydroxy-tetrahydrodipicolinate synthase from Geobacter sp. (strain M21).